The primary structure comprises 354 residues: Ribosomal RNA large subunit methyltransferase K (354 aa).

The protein belongs to the methyltransferase superfamily.

Its subcellular location is the cytoplasm. It carries out the reaction guanosine(2069) in 23S rRNA + S-adenosyl-L-methionine = N(2)-methylguanosine(2069) in 23S rRNA + S-adenosyl-L-homocysteine + H(+). Its function is as follows. Specifically methylates the guanine in position 2069 (m7G2069) of 23S rRNA. The sequence is that of Ribosomal RNA large subunit methyltransferase K (rlmK) from Neisseria meningitidis serogroup B (strain ATCC BAA-335 / MC58).